The primary structure comprises 151 residues: Phosphopantetheine adenylyltransferase (151 aa).

Residue T9 coordinates substrate. Residues 9–10 and H17 each bind ATP; that span reads TF. Substrate is bound by residues K41, T73, and R87. ATP-binding positions include 88 to 90, E98, and 122 to 128; these read GIR and LTCVSST.

It belongs to the bacterial CoaD family. As to quaternary structure, homohexamer. It depends on Mg(2+) as a cofactor.

It localises to the cytoplasm. It catalyses the reaction (R)-4'-phosphopantetheine + ATP + H(+) = 3'-dephospho-CoA + diphosphate. Its pathway is cofactor biosynthesis; coenzyme A biosynthesis; CoA from (R)-pantothenate: step 4/5. Reversibly transfers an adenylyl group from ATP to 4'-phosphopantetheine, yielding dephospho-CoA (dPCoA) and pyrophosphate. This is Phosphopantetheine adenylyltransferase from Bacteroides thetaiotaomicron (strain ATCC 29148 / DSM 2079 / JCM 5827 / CCUG 10774 / NCTC 10582 / VPI-5482 / E50).